A 618-amino-acid polypeptide reads, in one-letter code: Transport protein particle subunit trs85-2 (618 aa).

Belongs to the TRS85 family. In terms of assembly, part of the multisubunit TRAPP (transport protein particle) complexes I and II.

Its subcellular location is the golgi apparatus. The protein resides in the cis-Golgi network. Functionally, component of the TRAPP I and TRAPP II complexes. TRAPP I plays a key role in the late stages of endoplasmic reticulum to Golgi traffic. TRAPP II seems to play a role in intra-Golgi transport. Has a role late in meiosis following DNA replication. This Schizosaccharomyces pombe (strain 972 / ATCC 24843) (Fission yeast) protein is Transport protein particle subunit trs85-2 (trs85-2).